A 1320-amino-acid polypeptide reads, in one-letter code: Mediator of RNA polymerase II transcription subunit 15 (1320 aa).

Residues 235-244 (QQASLNQLTP) are compositionally biased toward polar residues. Disordered regions lie at residues 235 to 283 (QQAS…KPQQ), 372 to 398 (KNMM…PQQA), 540 to 688 (QLQQ…QQQT), 702 to 791 (QTQQ…PTEQ), and 1233 to 1270 (DSSS…DSKK). Low complexity-rich tracts occupy residues 245–283 (QQRA…KPQQ), 375–398 (MAQQ…PQQA), and 540–554 (QLQQ…HTQL). Polar residues predominate over residues 555–587 (ADSFSQRQFTSPTLAKPSANVSTIAQQQTQPTA). Low complexity-rich tracts occupy residues 588 to 624 (LSQS…QQQQ), 634 to 688 (QQQT…QQQT), and 702 to 780 (QTQQ…PQQT).

The protein belongs to the Mediator complex subunit 15 family. In terms of assembly, component of the Mediator complex.

It is found in the nucleus. In terms of biological role, component of the Mediator complex, a coactivator involved in regulated gene transcription of nearly all RNA polymerase II-dependent genes. Mediator functions as a bridge to convey information from gene-specific regulatory proteins to the basal RNA polymerase II transcription machinery. Mediator is recruited to promoters by direct interactions with regulatory proteins and serves as a scaffold for the assembly of a functional preinitiation complex with RNA polymerase II and the general transcription factors. The sequence is that of Mediator of RNA polymerase II transcription subunit 15 (GAL11) from Eremothecium gossypii (strain ATCC 10895 / CBS 109.51 / FGSC 9923 / NRRL Y-1056) (Yeast).